A 329-amino-acid chain; its full sequence is MTENARTTPEAVRTVACVGAGVIGGGWVAHFLGRGYRVVAWDPAPDAESRLRGLVSSAWPALEELGPAEGASMANLRVVDTLAEAVADADFVQESAPERLDLKIDLLAEIDAATPEGVVIASSTSGYSMSEMQVGARTPGRLVVGHPFNPPYLVPLVEVVGGERSERWAVDWASDFYRAAGKSVITMERELPGFIGNRIQEAAWREALHMVAEGEATVEQIDLAMTSGPGLRWAFFGPCLTFHLAGGEGGMAHMLDHFGPSLKSPWTRLEAPELTAGLRDRMVAGTDEVVAGRSTAELIAQRDRRLIAVARALEEVERAEAAERAGADA.

Gly19–Gly24 lines the NAD(+) pocket.

It belongs to the 3-hydroxyacyl-CoA dehydrogenase family. L-carnitine dehydrogenase subfamily. In terms of assembly, homodimer.

The protein resides in the cytoplasm. The enzyme catalyses carnitine + NAD(+) = 3-dehydrocarnitine + NADH + H(+). The protein operates within amine and polyamine metabolism; carnitine metabolism. Catalyzes the NAD(+)-dependent oxidation of L-carnitine to 3-dehydrocarnitine. In Nocardiopsis dassonvillei (strain ATCC 23218 / DSM 43111 / CIP 107115 / JCM 7437 / KCTC 9190 / NBRC 14626 / NCTC 10488 / NRRL B-5397 / IMRU 509) (Actinomadura dassonvillei), this protein is L-carnitine dehydrogenase.